Here is a 507-residue protein sequence, read N- to C-terminus: Fluoroacetaldehyde dehydrogenase (507 aa).

219–225 (GFGIEAG) is a binding site for NAD(+). Active-site residues include Glu263 and Cys302.

It belongs to the aldehyde dehydrogenase family. As to quaternary structure, homotetramer.

The enzyme catalyses fluoroacetaldehyde + NAD(+) + H2O = fluoroacetate + NADH + 2 H(+). Its function is as follows. Catalyzes the oxidation of fluoroacetaldehyde to fluoroacetate. Has high affinity for fluoroacetate and glycolaldehyde but not for acetaldehyde. The chain is Fluoroacetaldehyde dehydrogenase from Streptantibioticus cattleyicolor (strain ATCC 35852 / DSM 46488 / JCM 4925 / NBRC 14057 / NRRL 8057) (Streptomyces cattleya).